We begin with the raw amino-acid sequence, 466 residues long: MPRMTDQAMKPIHVIGGGMAGSEATWQLVSQGVPVILHEMRGVKGTDAHHTDGLAELVCSNSFRSDDHRTNAVGLLHEEMRRLDSIILRQGDAARLPAGGALAVDRDVFSQAVTKELSEHPLVTISREEIPALPPEDWDSVIIATGPLTSESLSEAILKETGEGELAFFDAIAPVVYRDSVNTEKAWFQSRYDKGDTDAERKAYLNCPMDRDQYEAFIDALIAAEKTEFKEWEANTPYFDGCLPIEVMAERGRETLRHGPMKPVGLTNPHNPTVKPWAIVQLRQDNALGTLFNLVGFQTKMKYGAQGEVLRMIPGLEEARFARLGGIHRNTFLNSPKLLDAQLRLKSQPRLRFAGQLIGVEGYVESAAMGLLAGRYAAAERLGASLTPPPATTALGALIGHVTGGHLISGKGSFQPMNVNFGLFPPIEQPTVDADGNRIKGKAKTPARKAAMSARALSDLADWQAG.

16-21 (GGGMAG) serves as a coordination point for FAD.

Belongs to the MnmG family. TrmFO subfamily. The cofactor is FAD.

The protein resides in the cytoplasm. The enzyme catalyses uridine(54) in tRNA + (6R)-5,10-methylene-5,6,7,8-tetrahydrofolate + NADH + H(+) = 5-methyluridine(54) in tRNA + (6S)-5,6,7,8-tetrahydrofolate + NAD(+). It catalyses the reaction uridine(54) in tRNA + (6R)-5,10-methylene-5,6,7,8-tetrahydrofolate + NADPH + H(+) = 5-methyluridine(54) in tRNA + (6S)-5,6,7,8-tetrahydrofolate + NADP(+). In terms of biological role, catalyzes the folate-dependent formation of 5-methyl-uridine at position 54 (M-5-U54) in all tRNAs. This chain is Methylenetetrahydrofolate--tRNA-(uracil-5-)-methyltransferase TrmFO, found in Maricaulis maris (strain MCS10) (Caulobacter maris).